The primary structure comprises 431 residues: Na(+)-translocating NADH-quinone reductase subunit F (431 aa).

The chain crosses the membrane as a helical span at residues 10–30; the sequence is IFIASTAFCALGLLLVAIILL. Residues 41 to 133 enclose the 2Fe-2S ferredoxin-type domain; the sequence is CKLRINNDDS…DMNLEIEERY (93 aa). [2Fe-2S] cluster-binding residues include cysteine 76, cysteine 82, cysteine 85, and cysteine 117. In terms of domain architecture, FAD-binding FR-type spans 136–286; sequence ASSWEGTVVS…SGPYGESFMK (151 aa). Residues 289-413 are catalytic; the sequence is NRPVIFLIGG…ALHNSSILTL (125 aa).

The protein belongs to the NqrF family. In terms of assembly, composed of six subunits; NqrA, NqrB, NqrC, NqrD, NqrE and NqrF. [2Fe-2S] cluster is required as a cofactor. FAD serves as cofactor.

The protein resides in the cell inner membrane. The catalysed reaction is a ubiquinone + n Na(+)(in) + NADH + H(+) = a ubiquinol + n Na(+)(out) + NAD(+). NQR complex catalyzes the reduction of ubiquinone-1 to ubiquinol by two successive reactions, coupled with the transport of Na(+) ions from the cytoplasm to the periplasm. The first step is catalyzed by NqrF, which accepts electrons from NADH and reduces ubiquinone-1 to ubisemiquinone by a one-electron transfer pathway. The sequence is that of Na(+)-translocating NADH-quinone reductase subunit F from Chlamydia muridarum (strain MoPn / Nigg).